A 543-amino-acid chain; its full sequence is CTP synthase (543 aa).

The interval 1-265 is amidoligase domain; sequence MTRYIFVTGG…DDFVVERFGL (265 aa). S13 lines the CTP pocket. Position 13 (S13) interacts with UTP. Residues 14–19 and D71 contribute to the ATP site; that span reads SLGKGI. Mg(2+) contacts are provided by D71 and E139. Residues 146–148, 186–191, and K222 contribute to the CTP site; these read DIE and KTKPTQ. Residues 186-191 and K222 each bind UTP; that span reads KTKPTQ. One can recognise a Glutamine amidotransferase type-1 domain in the interval 290–541; sequence TIAMVGKYME…VNAALAQKAK (252 aa). G351 contacts L-glutamine. C378 functions as the Nucleophile; for glutamine hydrolysis in the catalytic mechanism. L-glutamine-binding positions include 379 to 382, E402, and R469; that span reads LGMQ. Catalysis depends on residues H514 and E516.

It belongs to the CTP synthase family. In terms of assembly, homotetramer.

The catalysed reaction is UTP + L-glutamine + ATP + H2O = CTP + L-glutamate + ADP + phosphate + 2 H(+). It catalyses the reaction L-glutamine + H2O = L-glutamate + NH4(+). It carries out the reaction UTP + NH4(+) + ATP = CTP + ADP + phosphate + 2 H(+). Its pathway is pyrimidine metabolism; CTP biosynthesis via de novo pathway; CTP from UDP: step 2/2. Allosterically activated by GTP, when glutamine is the substrate; GTP has no effect on the reaction when ammonia is the substrate. The allosteric effector GTP functions by stabilizing the protein conformation that binds the tetrahedral intermediate(s) formed during glutamine hydrolysis. Inhibited by the product CTP, via allosteric rather than competitive inhibition. Its function is as follows. Catalyzes the ATP-dependent amination of UTP to CTP with either L-glutamine or ammonia as the source of nitrogen. Regulates intracellular CTP levels through interactions with the four ribonucleotide triphosphates. The chain is CTP synthase from Ectopseudomonas mendocina (strain ymp) (Pseudomonas mendocina).